The following is a 568-amino-acid chain: TWiK family of potassium channels protein 9 (568 aa).

The Cytoplasmic segment spans residues M1 to S15. Residues T16–L36 traverse the membrane as a helical segment. The segment at residues I163–A183 is an intramembrane region (pore-forming). A helical membrane pass occupies residues L191 to L211. Over G212–S316 the chain is Cytoplasmic. 2 disordered regions span residues Q243–V262 and M274–E314. Residues G297–N307 are compositionally biased toward acidic residues. Residues I317 to Y337 form a helical membrane-spanning segment. Positions F343 to V363 form an intramembrane region, pore-forming. Residues L370–I390 form a helical membrane-spanning segment. Residues A391–K568 are Cytoplasmic-facing.

The protein belongs to the two pore domain potassium channel (TC 1.A.1.8) family. Expressed in ray A-type neurons and cell bodies. Also seen in head, pharyngeal and phasmid neurons, and in coelomocytes.

The protein resides in the membrane. Potassium channel protein that may be component of regulatory network that controls ray development and function. The chain is TWiK family of potassium channels protein 9 (twk-9) from Caenorhabditis elegans.